The following is a 370-amino-acid chain: Sphingolipid delta(4)-desaturase (370 aa).

A run of 3 helical transmembrane segments spans residues 68–88 (VMGVVLLQLGIAYYLRHTPVF), 92–112 (FLTLAYVIGATANQAIFLAIH), and 128–148 (LFAVFANIPIGVPYSASFQPY). The short motif at 112–116 (HELSH) is the Histidine box-1 element. The short motif at 149-153 (HQLHH) is the Histidine box-2 element. Helical transmembrane passes span 173-193 (FLSSMPGKLFFAIFQIFFYAL), 197-217 (FITQIKFTYVHLVNVVFQLIF), and 220-240 (VMVTCWGWKALGYFIVSTFLA). Positions 299–303 (HNEHH) match the Histidine box-3 motif.

Belongs to the fatty acid desaturase type 1 family. DEGS subfamily.

The protein resides in the membrane. It carries out the reaction an N-acylsphinganine + 2 Fe(II)-[cytochrome b5] + O2 + 2 H(+) = an N-acylsphing-4-enine + 2 Fe(III)-[cytochrome b5] + 2 H2O. Its pathway is lipid metabolism; sphingolipid metabolism. In terms of biological role, delta(4)-fatty-acid desaturase which introduces a double bond at the 4-position in the long-chain base (LCB) of ceramides. Required for the formation of the monounsaturated sphingoid base (E)-sphing-4-enine during glucosylceramide (GluCer) biosynthesis. In Candida albicans (strain SC5314 / ATCC MYA-2876) (Yeast), this protein is Sphingolipid delta(4)-desaturase.